A 469-amino-acid polypeptide reads, in one-letter code: 3-isopropylmalate dehydratase large subunit (469 aa).

Residues Cys349, Cys409, and Cys412 each contribute to the [4Fe-4S] cluster site.

Belongs to the aconitase/IPM isomerase family. LeuC type 1 subfamily. Heterodimer of LeuC and LeuD. The cofactor is [4Fe-4S] cluster.

The catalysed reaction is (2R,3S)-3-isopropylmalate = (2S)-2-isopropylmalate. Its pathway is amino-acid biosynthesis; L-leucine biosynthesis; L-leucine from 3-methyl-2-oxobutanoate: step 2/4. Functionally, catalyzes the isomerization between 2-isopropylmalate and 3-isopropylmalate, via the formation of 2-isopropylmaleate. The polypeptide is 3-isopropylmalate dehydratase large subunit (Methylorubrum extorquens (strain CM4 / NCIMB 13688) (Methylobacterium extorquens)).